Reading from the N-terminus, the 345-residue chain is Protein Tob1 (345 aa).

Positions 22-39 (RRRVNIFGEELERLLKKK) match the Bipartite nuclear localization signal motif. Residues 82–92 (VRGNLPQDLSV) are important for nuclear localization. Positions 144 to 160 (DPASSVSSSPSPPFGHS) are enriched in low complexity. The segment at 144–171 (DPASSVSSSPSPPFGHSAAVSPTFMPRS) is disordered. The tract at residues 161 to 218 (AAVSPTFMPRSTQPLTFTTATFAATKFGSTKMKNSGRSNKVARTSPINLGLNVNDLLK) is required for interaction with CPEB3. Residue Thr204 is modified to Phosphothreonine. The short motif at 226 to 234 (MHSLYGLGL) is the Nuclear export signal element. Residues 231-267 (GLGLGSQQQPQQQQQPAQPPPPPPPPQQQQQQKTSAL) form a disordered region. Residues 237–246 (QQQPQQQQQP) are compositionally biased toward low complexity. Pro residues predominate over residues 247–257 (AQPPPPPPPPQ).

This sequence belongs to the BTG family. As to quaternary structure, interacts with ERBB2. Interacts with CNOT7. Interacts with CPEB3 (via C-terminal RNA-binding region); recruits CNOT7 to CPEB3 to form a ternary complex required for mRNA deadenylation and decay. Interacts with CNOT8. Interacts with CPEB4. Phosphorylated on Ser and Thr residues. Ubiquitous.

It localises to the cytoplasm. Its subcellular location is the nucleus. Anti-proliferative protein; the function is mediated by association with deadenylase subunits of the CCR4-NOT complex. Mediates CPEB3-accelerated mRNA deadenylation by binding to CPEB3 and recruiting CNOT7 which leads to target mRNA deadenylation and decay. The protein is Protein Tob1 (TOB1) of Homo sapiens (Human).